A 1010-amino-acid chain; its full sequence is Lysosomal alpha-mannosidase (1010 aa).

Residues 1 to 22 (MVIKKLFILIFCLFLIINEING) form the signal peptide. The propeptide at 23 to 40 (KKTKINDIKKSKPKLSST) is pro I. Residues H51 and D53 each contribute to the Zn(2+) site. N-linked (GlcNAc...) asparagine glycosylation occurs at N68. Zn(2+)-binding residues include D173 and H420. The active-site Nucleophile is D173. N-linked (GlcNAc...) asparagine glycans are attached at residues N480, N520, N528, N539, N623, N760, N784, N828, N954, and N963. The propeptide at 508–595 (RNEPVRIPIP…GGGKINEKVS (88 aa)) is pro II.

Belongs to the glycosyl hydrolase 38 family. Tetramer of equimolar amounts of 60 and 58 kDa subunits. Zn(2+) is required as a cofactor. Post-translationally, first cleaved into the mature 58 kDa subunit and an intermediate 82 kDa subunit. The latter is then cleaved to its mature 60 kDa subunit form. These events occur in multiple intracellular compartments. The 60 kDa subunit may form one or more intramolecular disulfide bonds.

The protein localises to the lysosome. It catalyses the reaction Hydrolysis of terminal, non-reducing alpha-D-mannose residues in alpha-D-mannosides.. The polypeptide is Lysosomal alpha-mannosidase (manA) (Dictyostelium discoideum (Social amoeba)).